Here is a 189-residue protein sequence, read N- to C-terminus: dCTP deaminase (189 aa).

DCTP is bound by residues Lys112 to Arg117, Thr136 to Glu138, Gln157, Tyr171, and Gln181. The Proton donor/acceptor role is filled by Glu138.

This sequence belongs to the dCTP deaminase family. As to quaternary structure, homotrimer.

It carries out the reaction dCTP + H2O + H(+) = dUTP + NH4(+). The protein operates within pyrimidine metabolism; dUMP biosynthesis; dUMP from dCTP (dUTP route): step 1/2. Functionally, catalyzes the deamination of dCTP to dUTP. The polypeptide is dCTP deaminase (Burkholderia orbicola (strain MC0-3)).